The primary structure comprises 289 residues: uncharacterized protein (289 aa).

Positions 1 to 20 (MNPMDRQTEGQEPQHQDRQP) are enriched in basic and acidic residues. The segment at 1–39 (MNPMDRQTEGQEPQHQDRQPGIESKMNPLPLSEDEDYRG) is disordered. NADP(+) is bound at residue 49-73 (IITGGDSGIGRAAAIAFAKEGADIS). Substrate is bound at residue Ser181. Catalysis depends on Tyr194, which acts as the Proton acceptor.

This sequence belongs to the short-chain dehydrogenases/reductases (SDR) family.

This is an uncharacterized protein from Bacillus subtilis (strain 168).